A 129-amino-acid polypeptide reads, in one-letter code: Lysozyme C (129 aa).

Residues 1-129 (KVYGRCELAA…VHAWIRGCRL (129 aa)) enclose the C-type lysozyme domain. Disulfide bonds link Cys6/Cys127, Cys30/Cys115, Cys64/Cys80, and Cys76/Cys94. Residues Glu35 and Asp52 contribute to the active site.

Belongs to the glycosyl hydrolase 22 family. Monomer.

The protein resides in the secreted. It catalyses the reaction Hydrolysis of (1-&gt;4)-beta-linkages between N-acetylmuramic acid and N-acetyl-D-glucosamine residues in a peptidoglycan and between N-acetyl-D-glucosamine residues in chitodextrins.. Functionally, lysozymes have primarily a bacteriolytic function; those in tissues and body fluids are associated with the monocyte-macrophage system and enhance the activity of immunoagents. In Tragopan temminckii (Temminck's tragopan), this protein is Lysozyme C (LYZ).